Here is a 245-residue protein sequence, read N- to C-terminus: ATP synthase subunit a, chloroplastic (245 aa).

5 helical membrane passes run 34 to 54 (TLMT…LSNL), 93 to 113 (VPFL…GALL), 132 to 152 (INTT…AGIS), 197 to 217 (LVIA…LMLL), and 218 to 238 (GLFT…AYIG).

Belongs to the ATPase A chain family. F-type ATPases have 2 components, CF(1) - the catalytic core - and CF(0) - the membrane proton channel. CF(1) has five subunits: alpha(3), beta(3), gamma(1), delta(1), epsilon(1). CF(0) has four main subunits: a, b, b' and c.

The protein resides in the plastid. It localises to the chloroplast thylakoid membrane. Key component of the proton channel; it plays a direct role in the translocation of protons across the membrane. The protein is ATP synthase subunit a, chloroplastic of Bigelowiella natans (Pedinomonas minutissima).